Consider the following 545-residue polypeptide: CTP synthase (545 aa).

The interval 1–266 is amidoligase domain; it reads MTTNYIFVTG…DDYICKRFSL (266 aa). S14 contacts CTP. S14 contacts UTP. Residues 15–20 and D72 contribute to the ATP site; that span reads SLGKGI. 2 residues coordinate Mg(2+): D72 and E140. CTP is bound by residues 147–149, 187–192, and K223; these read DIE and KTKPTQ. Residues 187-192 and K223 contribute to the UTP site; that span reads KTKPTQ. ATP is bound at residue 239-241; sequence KDV. One can recognise a Glutamine amidotransferase type-1 domain in the interval 291-542; sequence TIGMIGKYVE…VKAAGEYQKR (252 aa). L-glutamine is bound at residue G352. The Nucleophile; for glutamine hydrolysis role is filled by C379. L-glutamine is bound by residues 380 to 383, E403, and R470; that span reads LGMQ. Residues H515 and E517 contribute to the active site.

Belongs to the CTP synthase family. In terms of assembly, homotetramer.

The enzyme catalyses UTP + L-glutamine + ATP + H2O = CTP + L-glutamate + ADP + phosphate + 2 H(+). It catalyses the reaction L-glutamine + H2O = L-glutamate + NH4(+). The catalysed reaction is UTP + NH4(+) + ATP = CTP + ADP + phosphate + 2 H(+). It functions in the pathway pyrimidine metabolism; CTP biosynthesis via de novo pathway; CTP from UDP: step 2/2. With respect to regulation, allosterically activated by GTP, when glutamine is the substrate; GTP has no effect on the reaction when ammonia is the substrate. The allosteric effector GTP functions by stabilizing the protein conformation that binds the tetrahedral intermediate(s) formed during glutamine hydrolysis. Inhibited by the product CTP, via allosteric rather than competitive inhibition. Functionally, catalyzes the ATP-dependent amination of UTP to CTP with either L-glutamine or ammonia as the source of nitrogen. Regulates intracellular CTP levels through interactions with the four ribonucleotide triphosphates. The sequence is that of CTP synthase from Yersinia enterocolitica serotype O:8 / biotype 1B (strain NCTC 13174 / 8081).